Consider the following 605-residue polypeptide: Mini-chromosome maintenance complex-binding protein (605 aa).

Phosphoserine occurs at positions 147 and 150.

It belongs to the MCMBP family. As to quaternary structure, interacts with the MCM complex.

It localises to the nucleus. Its function is as follows. Associated component of the MCM complex that acts as a regulator of DNA replication. Binds to the MCM complex during late S phase and may act by promoting the disassembly of the MCM complex from chromatin. The protein is Mini-chromosome maintenance complex-binding protein of Drosophila melanogaster (Fruit fly).